The chain runs to 123 residues: Alpha-ketoglutarate dehydrogenase subunit 4, mitochondrial (123 aa).

The N-terminal 8 residues, 1–8 (MIATPIRL), are a transit peptide targeting the mitochondrion.

Belongs to the alpha-ketoglutarate dehydrogenase component 4 family. As to quaternary structure, component of the 2-oxoglutarate dehydrogenase complex (OGDC), also called alpha-ketoglutarate dehydrogenase (KGDH) complex. The copmplex is composed of the catalytic subunits OGDH (2-oxoglutarate dehydrogenase KGD1; also called E1 subunit), DLST (dihydrolipoamide succinyltransferase KGD2; also called E2 subunit) and DLD (dihydrolipoamide dehydrogenase LPD1; also called E3 subunit), and the assembly factor KGD4. Within OGDC, interacts (via N-terminus) with E3 subunit and (via C-terminus) with the complex core formed by E1 and E2 subunits.

The protein localises to the mitochondrion. Functionally, molecular adapter that is necessary to a form a stable 2-oxoglutarate dehydrogenase enzyme complex (OGDC). Required for incorporation of the E3 subunit (LPD1) into the E1-E2 core (KGD1-KGD2) of mitochondrial OGDC, and acting as a stability factor for the fully assembled complex. The sequence is that of Alpha-ketoglutarate dehydrogenase subunit 4, mitochondrial from Saccharomyces cerevisiae (strain ATCC 204508 / S288c) (Baker's yeast).